A 549-amino-acid polypeptide reads, in one-letter code: Cation/acetate symporter ActP (549 aa).

13 consecutive transmembrane segments (helical) span residues 33-53, 77-97, 103-123, 148-168, 183-203, 206-226, 262-282, 303-323, 355-375, 404-424, 428-448, 464-484, and 493-513; these read WQAI…TYWA, LAIA…ALVF, GLIY…LIAE, ILSA…QMVG, IAVV…GMLA, WVQI…AFMV, ISAL…PHIL, GFMG…IMLV, LFLG…VAGL, VSKI…VLFE, IAFM…PIIL, GGWL…TIWV, and IFPY…GIWF.

This sequence belongs to the sodium:solute symporter (SSF) (TC 2.A.21) family.

It localises to the cell inner membrane. Transports acetate. This is Cation/acetate symporter ActP from Escherichia fergusonii (strain ATCC 35469 / DSM 13698 / CCUG 18766 / IAM 14443 / JCM 21226 / LMG 7866 / NBRC 102419 / NCTC 12128 / CDC 0568-73).